The following is a 1077-amino-acid chain: Serine/threonine-protein kinase sel-5 (1077 aa).

In terms of domain architecture, Protein kinase spans 47 to 317 (VTIEKQIAEG…IYQTSVLAFE (271 aa)). ATP is bound by residues 53-61 (IAEGGFAIV) and Lys75. The Proton acceptor role is filled by Asp178. 4 disordered regions span residues 347–444 (MRDG…TDGS), 488–554 (GFTD…SQVV), 616–813 (ELDS…TNPF), and 920–1077 (LISV…PTDL). Over residues 369 to 399 (IQSSSKMASLSQQVPSISNISMPSGSGTVET) the composition is skewed to polar residues. The segment covering 491-515 (DLDKPALPRDRAQTDGKRRLPHESD) has biased composition (basic and acidic residues). The segment covering 541–554 (SSQQTTSKTSSQVV) has biased composition (low complexity). The segment covering 638–648 (LTVSTSSSAQP) has biased composition (polar residues). The segment covering 655–679 (TDEDDERQLLSETDEEEKYEIDEKE) has biased composition (acidic residues). Composition is skewed to basic and acidic residues over residues 697 to 708 (DEQRMNDRRRYS) and 739 to 751 (DSRRGGDTSHDED). Residues 770-780 (EDDGLEDDDDH) show a composition bias toward acidic residues. Residues 799–810 (GTSTPHTQNPIT) are compositionally biased toward polar residues. Residues 927–936 (TDPPPPPLPK) are compositionally biased toward pro residues. Positions 941–950 (ASPTQETTAT) are enriched in polar residues. A compositionally biased stretch (basic residues) spans 960–969 (KLLKKEKKKE). Positions 970–989 (KKDGKKDKLKLEEYREKGSS) are enriched in basic and acidic residues. The segment covering 1054–1067 (LTGKNASFVNTSFQ) has biased composition (polar residues).

The protein belongs to the protein kinase superfamily. Ser/Thr protein kinase family. Mg(2+) serves as cofactor.

The protein localises to the cytoplasm. The catalysed reaction is L-seryl-[protein] + ATP = O-phospho-L-seryl-[protein] + ADP + H(+). The enzyme catalyses L-threonyl-[protein] + ATP = O-phospho-L-threonyl-[protein] + ADP + H(+). Its function is as follows. Serine/threonine-protein kinase which may play a role in lin-12-mediated cell-fate decisions. The sequence is that of Serine/threonine-protein kinase sel-5 from Caenorhabditis elegans.